The chain runs to 464 residues: Soluble pyridine nucleotide transhydrogenase (464 aa).

Residue 35–44 (DDRRQVGGNC) coordinates FAD.

It belongs to the class-I pyridine nucleotide-disulfide oxidoreductase family. It depends on FAD as a cofactor.

The protein localises to the cytoplasm. The enzyme catalyses NAD(+) + NADPH = NADH + NADP(+). In terms of biological role, conversion of NADPH, generated by peripheral catabolic pathways, to NADH, which can enter the respiratory chain for energy generation. The polypeptide is Soluble pyridine nucleotide transhydrogenase (Pseudomonas putida (strain GB-1)).